A 468-amino-acid polypeptide reads, in one-letter code: MGEIVVLSSDDGMETIKNRVKSSEVVQWEKYLPKTVLRVLLVESDYSTRQIITALLRKCCYKVVAVSDGLAAWEVLKEKSHNIDLILTELDLPSISGFALLALVMEHEACKNIPVIMMSSQDSIKMVLKCMLRGAADYLIKPMRKNELKNLWQHVWRRLTLRDDPTAHAQSLPASQHNLEDTDETCEDSRYHSDQGSGAQAINYNGHNKLMENGKSVDERDEFKETFDVTMDLIGGIDKRPDSIYKDKSRDECVGPELGLSLKRSCSVSFENQDESKHQKLSLSDASAFSRFEESKSAEKAVVALEESTSGEPKTPTESHEKLRKVTSDQGSATTSSNQENIGSSSVSFRNQVLQSTVTNQKQDSPIPVESNREKAASKEVEAGSQSTNEGIAGQSSSTEKPKEEESAKQRWSRSQREAALMKFRLKRKDRCFDKKVRYQSRKKLAEQRPRVKGQFVRTVNSDASTKS.

A Response regulatory domain is found at 38 to 156 (RVLLVESDYS…ELKNLWQHVW (119 aa)). 2 stretches are compositionally biased toward polar residues: residues 168–177 (HAQSLPASQH) and 194–203 (DQGSGAQAIN). 3 disordered regions span residues 168-203 (HAQS…QAIN), 302-416 (VVAL…SRSQ), and 442-468 (RKKL…STKS). Positions 315–327 (TPTESHEKLRKVT) are enriched in basic and acidic residues. A compositionally biased stretch (polar residues) spans 328 to 364 (SDQGSATTSSNQENIGSSSVSFRNQVLQSTVTNQKQD). 2 stretches are compositionally biased toward basic and acidic residues: residues 371–382 (SNREKAASKEVE) and 400–409 (EKPKEEESAK). The CCT domain maps to 417–459 (REAALMKFRLKRKDRCFDKKVRYQSRKKLAEQRPRVKGQFVRT). The segment covering 458-468 (RTVNSDASTKS) has biased composition (polar residues).

Belongs to the ARR-like family. In terms of processing, phosphorylated. Phosphorylation varies throughout the diurnal cycle.

It is found in the nucleus. Functionally, transcriptional repressor of CCA1 and LHY, and positive regulator of LWD1 and LWD2 expression. Controls photoperiodic flowering response and temperature compensation. Involved in the positive and negative feedback loops of the circadian clock. Expression of several members of the ARR-like family is controlled by circadian rhythm. Regulated at the transcriptional level by a corepressor complex consisting of ELF4, ELF3, and LUX. APRR9, APRR7, and APRR5 coordinately act on the upstream region of the target genes to repress their expression from noon until midnight. The particular coordinated sequential expression of APRR9, APRR7, APRR5, APRR3 and APPR1 result to circadian waves that may be at the basis of the endogenous circadian clock. This is Two-component response regulator-like APRR9 (APRR9) from Arabidopsis thaliana (Mouse-ear cress).